Consider the following 284-residue polypeptide: Acetyl-coenzyme A carboxylase carboxyl transferase subunit beta (284 aa).

The 254-residue stretch at 31-284 (FWTYCKGCDS…LYQILAMHKK (254 aa)) folds into the CoA carboxyltransferase N-terminal domain. C35, C38, C54, and C57 together coordinate Zn(2+). The C4-type zinc-finger motif lies at 35 to 57 (CKGCDSHVFRKDIEENSFVCPKC).

The protein belongs to the AccD/PCCB family. Acetyl-CoA carboxylase is a heterohexamer composed of biotin carboxyl carrier protein (AccB), biotin carboxylase (AccC) and two subunits each of ACCase subunit alpha (AccA) and ACCase subunit beta (AccD). Zn(2+) serves as cofactor.

Its subcellular location is the cytoplasm. It carries out the reaction N(6)-carboxybiotinyl-L-lysyl-[protein] + acetyl-CoA = N(6)-biotinyl-L-lysyl-[protein] + malonyl-CoA. It participates in lipid metabolism; malonyl-CoA biosynthesis; malonyl-CoA from acetyl-CoA: step 1/1. Its function is as follows. Component of the acetyl coenzyme A carboxylase (ACC) complex. Biotin carboxylase (BC) catalyzes the carboxylation of biotin on its carrier protein (BCCP) and then the CO(2) group is transferred by the transcarboxylase to acetyl-CoA to form malonyl-CoA. The sequence is that of Acetyl-coenzyme A carboxylase carboxyl transferase subunit beta from Clostridioides difficile (strain 630) (Peptoclostridium difficile).